A 376-amino-acid chain; its full sequence is Pyrimidine monooxygenase RutA (376 aa).

FMN is bound by residues 61 to 62 (IK), Asn127, Glu136, 152 to 153 (RY), and Ser202.

This sequence belongs to the NtaA/SnaA/DszA monooxygenase family. RutA subfamily.

The enzyme catalyses uracil + FMNH2 + NADH + O2 = (Z)-3-ureidoacrylate + FMN + NAD(+) + H2O + H(+). It catalyses the reaction thymine + FMNH2 + NADH + O2 = (Z)-2-methylureidoacrylate + FMN + NAD(+) + H2O + H(+). Its function is as follows. Catalyzes the pyrimidine ring opening between N-3 and C-4 by an unusual flavin hydroperoxide-catalyzed mechanism, adding oxygen atoms in the process to yield ureidoacrylate peracid, that immediately reacts with FMN forming ureidoacrylate and FMN-N(5)-oxide. The FMN-N(5)-oxide reacts spontaneously with NADH to produce FMN. Requires the flavin reductase RutF to regenerate FMN in vivo. This chain is Pyrimidine monooxygenase RutA, found in Methylorubrum extorquens (strain CM4 / NCIMB 13688) (Methylobacterium extorquens).